Here is a 191-residue protein sequence, read N- to C-terminus: Shikimate kinase (191 aa).

14–19 (GSGKST) lines the ATP pocket. Residue serine 18 coordinates Mg(2+). Substrate contacts are provided by aspartate 36, arginine 60, and glycine 82. Arginine 120 lines the ATP pocket. Arginine 147 serves as a coordination point for substrate.

This sequence belongs to the shikimate kinase family. In terms of assembly, monomer. Mg(2+) serves as cofactor.

Its subcellular location is the cytoplasm. It catalyses the reaction shikimate + ATP = 3-phosphoshikimate + ADP + H(+). It participates in metabolic intermediate biosynthesis; chorismate biosynthesis; chorismate from D-erythrose 4-phosphate and phosphoenolpyruvate: step 5/7. Its function is as follows. Catalyzes the specific phosphorylation of the 3-hydroxyl group of shikimic acid using ATP as a cosubstrate. This Chlorobaculum tepidum (strain ATCC 49652 / DSM 12025 / NBRC 103806 / TLS) (Chlorobium tepidum) protein is Shikimate kinase.